A 457-amino-acid polypeptide reads, in one-letter code: Keratin, type II cytoskeletal 7 (457 aa).

Position 2 is an N-acetylserine (S2). Position 2 is a phosphoserine (S2). The interval 2–84 is head; the sequence is SIHFSSRSTA…DPTIQQVRQE (83 aa). An O-linked (GlcNAc) serine glycan is attached at S7. R15 is subject to Dimethylated arginine; alternate. An Omega-N-methylarginine; alternate modification is found at R15. Phosphoserine is present on residues S47 and S65. The segment at 84–120 is coil 1A; the sequence is EEREQIKTLNNKFASFIDKVRFLEQQNKMLETKWALL. The 313-residue stretch at 85–397 folds into the IF rod domain; sequence EREQIKTLNN…KLLEGEESRL (313 aa). T91 is modified (phosphothreonine). Residues 121–138 are linker 1; the sequence is QEQKSAKSSQLPRIFEAQ. K124 is covalently cross-linked (Glycyl lysine isopeptide (Lys-Gly) (interchain with G-Cter in SUMO2)). The interval 139 to 230 is coil 1B; sequence IAGLRQQLET…TLHETELAEL (92 aa). N6-acetyllysine is present on K173. Phosphoserine is present on residues S211, S246, and S248. Residues 231–254 form a linker 12 region; that stretch reads QSQISDTSVVLSMDNSRSLDLDGI. Residues 255–393 are coil 2; it reads IADVKAQYEE…ATYRKLLEGE (139 aa). Residues K259 and K280 each participate in a glycyl lysine isopeptide (Lys-Gly) (interchain with G-Cter in SUMO2) cross-link. Residue T283 is modified to Phosphothreonine. Residues K290 and K325 each participate in a glycyl lysine isopeptide (Lys-Gly) (interchain with G-Cter in SUMO2) cross-link. The tract at residues 394–457 is tail; sequence ESRLSGDGMG…TSTTRRGTHN (64 aa).

Belongs to the intermediate filament family. Heterotetramer of two type I and two type II keratins. Interacts with eukaryotic translation initiator factor 3 (eIF3) subunit EIF3S10. Interacts with GPER1. Post-translationally, arg-15 is dimethylated, probably to asymmetric dimethylarginine. As to expression, expressed in most simple epithelia tested including liver, lactating mammary gland, lung, kidney, stomach, duodenum, colon, oviduct, uterus, pancreas, epididymis, prostate, preputial gland and mesothelium, and in most stratified epithelia tested including dorsal skin, paw/toe, tail, tongue, cervix, forestomach, and bladder. Also expressed in Henle layer of the inner root sheath of whisker follicle.

Its function is as follows. Blocks interferon-dependent interphase and stimulates DNA synthesis in cells. This Mus musculus (Mouse) protein is Keratin, type II cytoskeletal 7.